The chain runs to 349 residues: Cell adhesion molecule CEACAM8 (349 aa).

The signal sequence occupies residues 1–34; sequence MGPISAPSCRWRIPWQGLLLTASLFTFWNPPTTA. The region spanning 35–142 is the Ig-like V-type domain; sequence QLTIEAVPSN…EVTGQFSVHP (108 aa). N-linked (GlcNAc...) asparagine glycans are attached at residues N104, N111, N115, N152, N173, N197, N224, N256, N274, N288, and N309. Ig-like C2-type domains follow at residues 145 to 232 and 237 to 319; these read PKPS…VTLN and PDAP…ITVS. A disulfide bridge connects residues C167 and C215. C259 and C299 form a disulfide bridge. D320 carries the GPI-anchor amidated aspartate lipid modification. Positions 321–349 are cleaved as a propeptide — removed in mature form; it reads ALVQGSSPGLSARATVSIMIGVLARVALI.

This sequence belongs to the immunoglobulin superfamily. CEA family. In terms of assembly, monomer. Heterodimer with CEACAM6; heterodimerizes via its Ig-like V-type domain. Post-translationally, glycosylated. As to expression, expressed in leukocytes of chronic myeloid Leukemia patients and bone marrow.

It localises to the cell membrane. The protein localises to the cell surface. Its function is as follows. Cell surface glycoprotein that plays a role in cell adhesion in a calcium-independent manner. Mediates heterophilic cell adhesion with other carcinoembryonic antigen-related cell adhesion molecules, such as CEACAM6. Heterophilic interaction with CEACAM8 occurs in activated neutrophils. This is Cell adhesion molecule CEACAM8 from Homo sapiens (Human).